Reading from the N-terminus, the 149-residue chain is D-aminoacyl-tRNA deacylase (149 aa).

The Gly-cisPro motif, important for rejection of L-amino acids motif lies at 137–138 (GP).

The protein belongs to the DTD family. Homodimer.

The protein resides in the cytoplasm. It carries out the reaction glycyl-tRNA(Ala) + H2O = tRNA(Ala) + glycine + H(+). The enzyme catalyses a D-aminoacyl-tRNA + H2O = a tRNA + a D-alpha-amino acid + H(+). Its function is as follows. An aminoacyl-tRNA editing enzyme that deacylates mischarged D-aminoacyl-tRNAs. Also deacylates mischarged glycyl-tRNA(Ala), protecting cells against glycine mischarging by AlaRS. Acts via tRNA-based rather than protein-based catalysis; rejects L-amino acids rather than detecting D-amino acids in the active site. By recycling D-aminoacyl-tRNA to D-amino acids and free tRNA molecules, this enzyme counteracts the toxicity associated with the formation of D-aminoacyl-tRNA entities in vivo and helps enforce protein L-homochirality. The chain is D-aminoacyl-tRNA deacylase from Syntrophomonas wolfei subsp. wolfei (strain DSM 2245B / Goettingen).